We begin with the raw amino-acid sequence, 359 residues long: Peptide chain release factor 1 (359 aa).

At Gln-233 the chain carries N5-methylglutamine.

Belongs to the prokaryotic/mitochondrial release factor family. Methylated by PrmC. Methylation increases the termination efficiency of RF1.

The protein resides in the cytoplasm. Its function is as follows. Peptide chain release factor 1 directs the termination of translation in response to the peptide chain termination codons UAG and UAA. The protein is Peptide chain release factor 1 of Orientia tsutsugamushi (strain Ikeda) (Rickettsia tsutsugamushi).